The sequence spans 497 residues: Gasdermin-E (497 aa).

The segment at 1 to 56 (MFAKATRSFLREVDAEGDLIAVSNLNDSDKSQLLSLVTKKKRFWCWQRPKYQFLSV) is membrane targeting domain. At Cys-45 the chain carries S-(2-succinyl)cysteine. A Glycyl lysine isopeptide (Lys-Gly) (interchain with G-Cter in ubiquitin) cross-link involves residue Lys-120. S-(2-succinyl)cysteine is present on residues Cys-156, Cys-168, and Cys-180. Lys-189 is covalently cross-linked (Glycyl lysine isopeptide (Lys-Gly) (interchain with G-Cter in ubiquitin)). S-(2-succinyl)cysteine occurs at positions 235, 371, 409, 418, and 491.

This sequence belongs to the gasdermin family. Homooligomer; homooligomeric ring-shaped pore complex containing 27-28 subunits when inserted in the membrane. Cleavage at Asp-270 by CASP3 (mature and uncleaved precursor forms) or granzyme B (GZMB) relieves autoinhibition and is sufficient to initiate pyroptosis. In terms of processing, succination by the Krebs cycle intermediate fumarate, which leads to S-(2-succinyl)cysteine residues, inhibits processing by caspases, and ability to initiate pyroptosis. Succination modification is catalyzed by a non-enzymatic reaction caused by an accumulation of fumarate. Post-translationally, ubiquitinated on Lys-120 and Lys-189 via 'Lys-48'-linked polyubiquitin chains, leading to proteasomal degradation. Deubiquitinated by USP48, leading to increased stability. Palmitoylated.

The protein resides in the cell membrane. It is found in the cytoplasm. The protein localises to the cytosol. Its activity is regulated as follows. The full-length protein before cleavage is inactive: intramolecular interactions between N- and C-terminal domains mediate autoinhibition in the absence of activation signal. The intrinsic pyroptosis-inducing activity is carried by the released N-terminal moiety (Gasdermin-E, N-terminal) following cleavage by CASP3 or granzyme B (GZMB). Activated by NLRP1 in the absence of GSDMD expression: NLRP1 cleaves and activates CASP8, promoting downstream activation of CASP3 and subsequent activation of GSDME. In terms of biological role, precursor of a pore-forming protein that converts non-inflammatory apoptosis to pyroptosis. This form constitutes the precursor of the pore-forming protein: upon cleavage, the released N-terminal moiety (Gasdermin-E, N-terminal) binds to membranes and forms pores, triggering pyroptosis. Pore-forming protein produced by cleavage by CASP3 or granzyme B (GZMB), which converts non-inflammatory apoptosis to pyroptosis or promotes granzyme-mediated pyroptosis, respectively. After cleavage, moves to the plasma membrane, homooligomerizes within the membrane and forms pores of 10-15 nanometers (nm) of inner diameter, allowing the release of mature interleukins (IL1B and IL16) and triggering pyroptosis. Binds to inner leaflet lipids, bisphosphorylated phosphatidylinositols, such as phosphatidylinositol (4,5)-bisphosphate. Cleavage by CASP3 switches CASP3-mediated apoptosis induced by TNF or danger signals, such as chemotherapy drugs, to pyroptosis. Mediates secondary necrosis downstream of the mitochondrial apoptotic pathway and CASP3 activation as well as in response to viral agents. Exhibits bactericidal activity. Cleavage by GZMB promotes tumor suppressor activity by triggering robust anti-tumor immunity. Suppresses tumors by mediating granzyme-mediated pyroptosis in target cells of natural killer (NK) cells: cleavage by granzyme B (GZMB), delivered to target cells from NK-cells, triggers pyroptosis of tumor cells and tumor suppression. May play a role in the p53/TP53-regulated cellular response to DNA damage. The chain is Gasdermin-E from Equus caballus (Horse).